We begin with the raw amino-acid sequence, 296 residues long: MACSIGNAFRCSSDTLRFAPRQQCSSRLNPNPSSFLSFNSSPILAQNLGASSSSLSRRTIRARTKMAASEASINGSNRMLVFVPPHPLIKHWISVLRNEQTPCPVFRNAIAELGRLLMYEASREWLPTVVGEIMSPMGPASVEFIDPREPIAVVPILRAGLALAEHASSVLPANKIYHLGVSRDEKTLLPSVYLNKLPDEFPKNSRVFLVDPVLATGGTIMAAMDLLKERGLSVQQIKVICAIAAPPALSKLNEKFPGLHVYAGIIDPEVNEKGYIIPGLGDAGDRSFGTETHWVK.

A chloroplast-targeting transit peptide spans M1–R61. A2 carries the post-translational modification N-acetylalanine. R148 to I151 provides a ligand contact to GTP. 5-phospho-alpha-D-ribose 1-diphosphate is bound by residues R158, R183, D211, T216–T219, and D282. Residue G281–A283 participates in uracil binding.

It belongs to the UPRTase family. The cofactor is Mg(2+).

It localises to the plastid. It is found in the chloroplast. The enzyme catalyses UMP + diphosphate = 5-phospho-alpha-D-ribose 1-diphosphate + uracil. Its pathway is pyrimidine metabolism; UMP biosynthesis via salvage pathway; UMP from uracil: step 1/1. Its activity is regulated as follows. Allosterically activated by GTP. In terms of biological role, uracil phosphoribosyltransferase (UPRT) that catalyzes the conversion of uracil and 5-phospho-alpha-D-ribose 1-diphosphate (PRPP) to UMP and diphosphate. Is probably the only functional UPRT, since the dual-domain proteins of the UKL family seem to lack this activity. In Arabidopsis thaliana (Mouse-ear cress), this protein is Uracil phosphoribosyltransferase, chloroplastic (UPP).